A 149-amino-acid polypeptide reads, in one-letter code: Nucleoside diphosphate kinase 1 (149 aa).

K9, F57, R85, T91, R102, and N112 together coordinate ATP. H115 acts as the Pros-phosphohistidine intermediate in catalysis.

As to quaternary structure, homohexamer. It depends on Mg(2+) as a cofactor.

It catalyses the reaction a 2'-deoxyribonucleoside 5'-diphosphate + ATP = a 2'-deoxyribonucleoside 5'-triphosphate + ADP. The catalysed reaction is a ribonucleoside 5'-diphosphate + ATP = a ribonucleoside 5'-triphosphate + ADP. In terms of biological role, major role in the synthesis of nucleoside triphosphates other than ATP. The ATP gamma phosphate is transferred to the NDP beta phosphate via a ping-pong mechanism, using a phosphorylated active-site intermediate. This NDK is microtubule-associated. In Oryza sativa subsp. indica (Rice), this protein is Nucleoside diphosphate kinase 1 (NDKR).